The sequence spans 466 residues: Argininosuccinate lyase (466 aa).

2-(N(omega)-L-arginino)succinate contacts are provided by S27, N114, and T159. H160 (proton acceptor) is an active-site residue. S281 acts as the Proton donor in catalysis. 2-(N(omega)-L-arginino)succinate-binding residues include N289, Y321, Q326, and K329.

This sequence belongs to the lyase 1 family. Argininosuccinate lyase subfamily. In terms of assembly, homotetramer. In terms of processing, the N-terminus is blocked. In terms of tissue distribution, eye lens.

It catalyses the reaction 2-(N(omega)-L-arginino)succinate = fumarate + L-arginine. The protein operates within amino-acid biosynthesis; L-arginine biosynthesis; L-arginine from L-ornithine and carbamoyl phosphate: step 3/3. Delta crystallin, the principal crystallin in embryonic lens, is found only in birds and reptiles. This protein also functions as an enzymatically active argininosuccinate lyase, but it has a low activity. The polypeptide is Argininosuccinate lyase (ASL) (Columba livia (Rock dove)).